We begin with the raw amino-acid sequence, 178 residues long: Caveolin-1 (178 aa).

Position 2 is an N-acetylserine (S2). Phosphoserine is present on S2. Residues 2–94 (SGGKYVDSEG…WKASFTTFTV (93 aa)) form a required for homooligomerization region. At 2 to 104 (SGGKYVDSEG…TKYWFYRLLS (103 aa)) the chain is on the cytoplasmic side. Position 5 is an N6-acetyllysine; alternate (K5). A Glycyl lysine isopeptide (Lys-Gly) (interchain with G-Cter in ubiquitin); alternate cross-link involves residue K5. The residue at position 6 (Y6) is a Phosphotyrosine. A Phosphoserine modification is found at S9. Y14 carries the post-translational modification Phosphotyrosine; by ABL1. Residue Y25 is modified to Phosphotyrosine. Glycyl lysine isopeptide (Lys-Gly) (interchain with G-Cter in ubiquitin) cross-links involve residues K26, K30, K39, K47, and K57. The interaction with CAVIN3 stretch occupies residues 82–94 (DGIWKASFTTFTV). The segment at residues 105–125 (SLVGIPVALIWGIYFAILSFL) is an intramembrane region (helical). At 126–178 (YIWAVVPCIKSFLIKIQCISRIYSICIHTFCDPLYEAIGKIFSNIRISMQKEI) the chain is on the cytoplasmic side. The interval 131-142 (VPCIKSFLIKIQ) is interacts with SPRY1, SPRY2, SPRY3 and SPRY4. S-palmitoyl cysteine attachment occurs at residues C133, C143, and C156. The segment at 149-160 (SICIHTFCDPLY) is interacts with SPRY1, SPRY2, and SPRY4. Positions 167 to 178 (FSNIRISMQKEI) are interacts with SPRY1, SPRY2, SPRY3 and SPRY4.

This sequence belongs to the caveolin family. In terms of assembly, homooligomer. Interacts with GLIPR2. Interacts with NOSTRIN. Interacts with SNAP25 and STX1A. Interacts (via the N-terminus) with DPP4; the interaction is direct. Interacts with CTNNB1, CDH1 and JUP. Interacts with PACSIN2; this interaction induces membrane tubulation. Interacts with SLC7A9. Interacts with BMX and BTK. Interacts with TGFBR1. Interacts with CAVIN3 (via leucine-zipper domain) in a cholesterol-sensitive manner. Interacts with CAVIN1. Interacts with EHD2 in a cholesterol-dependent manner. Forms a ternary complex with UBXN6 and VCP; mediates CAV1 targeting to lysosomes for degradation. Interacts with ABCG1; this interaction regulates ABCG1-mediated cholesterol efflux. Interacts with NEU3; this interaction enhances NEU3 sialidase activity within caveola. Interacts (via C-terminus) with SPRY1, SPRY2 (via C-terminus), SPRY3, and SPRY4. Interacts with IGFBP5; this interaction allows trafficking of IGFBP5 from the plasma membrane to the nucleus. Post-translationally, phosphorylated at Tyr-14 by ABL1 in response to oxidative stress. Ubiquitinated. Undergo monoubiquitination and multi- and/or polyubiquitination. Monoubiquitination of N-terminal lysines promotes integration in a ternary complex with UBXN6 and VCP which promotes oligomeric CAV1 targeting to lysosomes for degradation. Ubiquitinated by ZNRF1; leading to degradation and modulation of the TLR4-mediated immune response.

It is found in the golgi apparatus membrane. The protein resides in the cell membrane. It localises to the membrane. Its subcellular location is the caveola. The protein localises to the membrane raft. In terms of biological role, may act as a scaffolding protein within caveolar membranes. Forms a stable heterooligomeric complex with CAV2 that targets to lipid rafts and drives caveolae formation. Mediates the recruitment of CAVIN proteins (CAVIN1/2/3/4) to the caveolae. Interacts directly with G-protein alpha subunits and can functionally regulate their activity. Involved in the costimulatory signal essential for T-cell receptor (TCR)-mediated T-cell activation. Its binding to DPP4 induces T-cell proliferation and NF-kappa-B activation in a T-cell receptor/CD3-dependent manner. Recruits CTNNB1 to caveolar membranes and may regulate CTNNB1-mediated signaling through the Wnt pathway. Negatively regulates TGFB1-mediated activation of SMAD2/3 by mediating the internalization of TGFBR1 from membrane rafts leading to its subsequent degradation. Binds 20(S)-hydroxycholesterol (20(S)-OHC). This is Caveolin-1 (CAV1) from Atelerix albiventris (Middle-African hedgehog).